A 786-amino-acid polypeptide reads, in one-letter code: MEATGRGLFPNKPTLPAGPRKRGPLLPAAPPPPSPSSLPLDSLLLHLTAPAPAPAPAPRRSHQTPTPPHSFLSPDAQVLVLAISSHPLPTLAAFLASRRDELLRADITSLLKALELSGHWEWALALLRWAGKEGAADASALEMVVRALGREGQHDAVCALLDETPLPPGSRLDVRAYTTVLHALSRAGRYERALELFAELRRQGVAPTLVTYNVVLDVYGRMGRSWPRIVALLDEMRAAGVEPDGFTASTVIAACCRDGLVDEAVAFFEDLKARGHAPCVVTYNALLQVFGKAGNYTEALRVLGEMEQNGCQPDAVTYNELAGTYARAGFFEEAARCLDTMASKGLLPNAFTYNTVMTAYGNVGKVDEALALFDQMKKTGFVPNVNTYNLVLGMLGKKSRFTVMLEMLGEMSRSGCTPNRVTWNTMLAVCGKRGMEDYVTRVLEGMRSCGVELSRDTYNTLIAAYGRCGSRTNAFKMYNEMTSAGFTPCITTYNALLNVLSRQGDWSTAQSIVSKMRTKGFKPNEQSYSLLLQCYAKGGNVAGIAAIENEVYGSGAVFPSWVILRTLVIANFKCRRLDGMETAFQEVKARGYNPDLVIFNSMLSIYAKNGMYSKATEVFDSIKRSGLSPDLITYNSLMDMYAKCSESWEAEKILNQLKCSQTMKPDVVSYNTVINGFCKQGLVKEAQRVLSEMVADGMAPCAVTYHTLVGGYSSLEMFSEAREVIGYMVQHGLKPMELTYRRVVESYCRAKRFEEARGFLSEVSETDLDFDKKALEAYIEDAQFGR.

The tract at residues 1–71 is disordered; it reads MEATGRGLFP…HQTPTPPHSF (71 aa). The transit peptide at 1 to 95 directs the protein to the chloroplast; the sequence is MEATGRGLFP…HPLPTLAAFL (95 aa). Residues 27-36 are compositionally biased toward pro residues; it reads PAAPPPPSPS. The span at 37 to 50 shows a compositional bias: low complexity; it reads SLPLDSLLLHLTAP. 18 PPR repeats span residues 137 to 167, 173 to 207, 208 to 243, 244 to 278, 279 to 313, 314 to 348, 349 to 383, 384 to 418, 419 to 453, 454 to 488, 489 to 523, 524 to 558, 560 to 594, 595 to 629, 630 to 664, 666 to 700, 701 to 735, and 736 to 770; these read DASA…TPLP, DVRA…GVAP, TLVT…GVEP, DGFT…GHAP, CVVT…GCQP, DAVT…GLLP, NAFT…GFVP, NVNT…GCTP, NRVT…GVEL, SRDT…GFTP, CITT…GFKP, NEQS…GAVF, SWVI…GYNP, DLVI…GLSP, DLIT…QTMK, DVVS…GMAP, CAVT…GLKP, and MELT…DLDF.

The protein belongs to the PPR family. P subfamily. As to quaternary structure, forms homodimers.

The protein localises to the plastid. It is found in the chloroplast stroma. Its function is as follows. Involved in chloroplast mRNA stability. Binds specifically to two intergenic RNA regions of similar sequence located in the chloroplast atpH 5'-UTR and psaJ 3'-UTR, and serves as a barrier to RNA decay. Binding to a specific site in the intergenic region of the chloroplast atpH is sufficient to block 5'-3' and 3'-5' exonucleases. Acts as a protein barrier to block mRNA degradation by exonucleases, and defines processed mRNA termini in chloroplasts. Remodels the structure of the atpH ribosome-binding site in a manner that can account for its ability to enhance translation. Stabilizes a RNA 3'-end downstream from psaI. Binds atpH RNA as a monomer. The sequence is that of Pentatricopeptide repeat-containing protein 10, chloroplastic from Zea mays (Maize).